Consider the following 145-residue polypeptide: MGGFTEKQEALVNSSYEAFKANVPQYSVVFYTSILEKAPAAKDLFPFLANGVDPTNPKLIGHAEKLFGLVHDSAAQLRAKGAVVADAALGSLHAQKGVTDPQFVVVKEALLKTVKEAVGDKWSDELSNAWEVAYNELAAALKKAF.

Residues 3–145 form the Globin domain; it reads GFTEKQEALV…ELAAALKKAF (143 aa). Nitrated tyrosine is present on residues tyrosine 26 and tyrosine 31. Residue histidine 62 coordinates O2. 3 residues coordinate heme b: lysine 65, histidine 93, and lysine 96. Position 134 is a nitrated tyrosine (tyrosine 134).

The protein belongs to the plant globin family. Monomer. Nitrated in effective nodules and particularly in hypoxic conditions; this mechanism may play a protective role in the symbiosis by buffering toxic peroxynitrite NO(2)(-). Nitration level decrease during nodule senescence. As to expression, root nodules.

It localises to the cytoplasm. Its subcellular location is the cytosol. The protein localises to the nucleus. Functionally, leghemoglobin that reversibly binds oxygen O(2) through a pentacoordinated heme iron. In root nodules, facilitates the diffusion of oxygen to the bacteroids while preventing the bacterial nitrogenase from being inactivated by buffering dioxygen, nitric oxide and carbon monoxide, and promoting the formation of reactive oxygen species (ROS, e.g. H(2)O(2)). This role is essential for symbiotic nitrogen fixation (SNF). This is Leghemoglobin from Psophocarpus tetragonolobus (Winged bean).